The following is a 230-amino-acid chain: 2,3-bisphosphoglycerate-dependent phosphoglycerate mutase (230 aa).

Substrate is bound by residues 8 to 15 (RHGESEWN), 21 to 22 (TG), Arg-60, 87 to 90 (ERHY), Lys-98, 114 to 115 (RR), and 183 to 184 (GN). Catalysis depends on His-9, which acts as the Tele-phosphohistidine intermediate. Residue Glu-87 is the Proton donor/acceptor of the active site.

It belongs to the phosphoglycerate mutase family. BPG-dependent PGAM subfamily.

It catalyses the reaction (2R)-2-phosphoglycerate = (2R)-3-phosphoglycerate. It functions in the pathway carbohydrate degradation; glycolysis; pyruvate from D-glyceraldehyde 3-phosphate: step 3/5. In terms of biological role, catalyzes the interconversion of 2-phosphoglycerate and 3-phosphoglycerate. This is 2,3-bisphosphoglycerate-dependent phosphoglycerate mutase from Streptococcus pneumoniae (strain P1031).